The sequence spans 216 residues: Peptide methionine sulfoxide reductase MsrA (216 aa).

Cysteine 54 is an active-site residue.

The protein belongs to the MsrA Met sulfoxide reductase family.

The catalysed reaction is L-methionyl-[protein] + [thioredoxin]-disulfide + H2O = L-methionyl-(S)-S-oxide-[protein] + [thioredoxin]-dithiol. It carries out the reaction [thioredoxin]-disulfide + L-methionine + H2O = L-methionine (S)-S-oxide + [thioredoxin]-dithiol. In terms of biological role, has an important function as a repair enzyme for proteins that have been inactivated by oxidation. Catalyzes the reversible oxidation-reduction of methionine sulfoxide in proteins to methionine. This is Peptide methionine sulfoxide reductase MsrA from Xanthomonas campestris pv. campestris (strain 8004).